A 226-amino-acid polypeptide reads, in one-letter code: Ribonuclease HII (226 aa).

One can recognise an RNase H type-2 domain in the interval 29–220 (GPVAGVDEAG…VAALLHRVDN (192 aa)). D35, E36, and D129 together coordinate a divalent metal cation.

The protein belongs to the RNase HII family. Mn(2+) is required as a cofactor. Requires Mg(2+) as cofactor.

The protein resides in the cytoplasm. It carries out the reaction Endonucleolytic cleavage to 5'-phosphomonoester.. Endonuclease that specifically degrades the RNA of RNA-DNA hybrids. In Rhodococcus opacus (strain B4), this protein is Ribonuclease HII.